A 778-amino-acid polypeptide reads, in one-letter code: Aerobic respiration control sensor protein ArcB (778 aa).

Topologically, residues 1-25 (MKQIRLLAQYYVDLMMKLGLVRFSM) are cytoplasmic. The helical transmembrane segment at 26 to 46 (LLALALVVLAIVVQMAVTMVL) threads the bilayer. The Periplasmic portion of the chain corresponds to 47–57 (HGQVESIDVIR). Residues 58–78 (SIFFGLLITPWAVYFLSVVVE) traverse the membrane as a helical segment. Over 79–778 (QLEESRQRLS…KAWVAKATKK (700 aa)) the chain is Cytoplasmic. Positions 153 to 223 (QSSFLRSFLD…ETDEKVFRHN (71 aa)) constitute a PAS domain. One can recognise a PAC domain in the interval 226–278 (LTYEQWLDYPDGRKACFEIRKVPYYDRVGKRHGLMGFGRDITERKRYQDALER). The 219-residue stretch at 289-507 (TISHELRTPL…TFTLTIHAPS (219 aa)) folds into the Histidine kinase domain. His-292 bears the Phosphohistidine; by autocatalysis mark. The Response regulatory domain maps to 527 to 643 (NVLLVEDIEL…ALTAMIKKFW (117 aa)). Position 576 is a 4-aspartylphosphate (Asp-576). Residues 678 to 771 (GPKLITDGLA…RHDVEVLKAW (94 aa)) form the HPt domain. At His-717 the chain carries Phosphohistidine.

Post-translationally, activation requires a sequential transfer of a phosphate group from a His in the primary transmitter domain, to an Asp in the receiver domain and to a His in the secondary transmitter domain.

The protein resides in the cell inner membrane. The enzyme catalyses ATP + protein L-histidine = ADP + protein N-phospho-L-histidine.. Its function is as follows. Member of the two-component regulatory system ArcB/ArcA. Sensor-regulator protein for anaerobic repression of the arc modulon. Activates ArcA via a four-step phosphorelay. ArcB can also dephosphorylate ArcA by a reverse phosphorelay involving His-717 and Asp-576. The protein is Aerobic respiration control sensor protein ArcB (arcB) of Escherichia coli (strain K12).